The following is a 355-amino-acid chain: Protein RecA (355 aa).

67–74 (GPESSGKT) contacts ATP. Residues 331–355 (NQDDKPDFTPAAHEVDEGSEAKENF) are disordered.

It belongs to the RecA family.

The protein localises to the cytoplasm. In terms of biological role, can catalyze the hydrolysis of ATP in the presence of single-stranded DNA, the ATP-dependent uptake of single-stranded DNA by duplex DNA, and the ATP-dependent hybridization of homologous single-stranded DNAs. It interacts with LexA causing its activation and leading to its autocatalytic cleavage. The chain is Protein RecA from Erwinia tasmaniensis (strain DSM 17950 / CFBP 7177 / CIP 109463 / NCPPB 4357 / Et1/99).